The following is a 69-amino-acid chain: Large ribosomal subunit protein bL32c (69 aa).

Belongs to the bacterial ribosomal protein bL32 family.

It localises to the plastid. The protein localises to the chloroplast. In Anthoceros angustus (Hornwort), this protein is Large ribosomal subunit protein bL32c (rpl32).